Reading from the N-terminus, the 734-residue chain is Phosphoribosylformylglycinamidine synthase subunit PurL (734 aa).

H46 is an active-site residue. Y49 and K88 together coordinate ATP. A Mg(2+)-binding site is contributed by E90. Substrate is bound by residues 91-94 (SHNH) and R113. H92 acts as the Proton acceptor in catalysis. A Mg(2+)-binding site is contributed by D114. Residue Q237 participates in substrate binding. Position 265 (D265) interacts with Mg(2+). 309–311 (ESQ) is a substrate binding site. ATP contacts are provided by D489 and G526. Position 527 (N527) interacts with Mg(2+). A substrate-binding site is contributed by S529.

This sequence belongs to the FGAMS family. Monomer. Part of the FGAM synthase complex composed of 1 PurL, 1 PurQ and 2 PurS subunits.

The protein localises to the cytoplasm. The enzyme catalyses N(2)-formyl-N(1)-(5-phospho-beta-D-ribosyl)glycinamide + L-glutamine + ATP + H2O = 2-formamido-N(1)-(5-O-phospho-beta-D-ribosyl)acetamidine + L-glutamate + ADP + phosphate + H(+). It functions in the pathway purine metabolism; IMP biosynthesis via de novo pathway; 5-amino-1-(5-phospho-D-ribosyl)imidazole from N(2)-formyl-N(1)-(5-phospho-D-ribosyl)glycinamide: step 1/2. In terms of biological role, part of the phosphoribosylformylglycinamidine synthase complex involved in the purines biosynthetic pathway. Catalyzes the ATP-dependent conversion of formylglycinamide ribonucleotide (FGAR) and glutamine to yield formylglycinamidine ribonucleotide (FGAM) and glutamate. The FGAM synthase complex is composed of three subunits. PurQ produces an ammonia molecule by converting glutamine to glutamate. PurL transfers the ammonia molecule to FGAR to form FGAM in an ATP-dependent manner. PurS interacts with PurQ and PurL and is thought to assist in the transfer of the ammonia molecule from PurQ to PurL. This is Phosphoribosylformylglycinamidine synthase subunit PurL from Gluconobacter oxydans (strain 621H) (Gluconobacter suboxydans).